The sequence spans 897 residues: F-BAR domain only protein 1 (897 aa).

Residues 1–276 (MIHFFHTLQG…VGFEEYLSSL (276 aa)) are mediates membrane-binding. Residues 2 to 248 (IHFFHTLQGE…NVENIGIENL (247 aa)) enclose the F-BAR domain. The stretch at 134–154 (LQKTREGYHSKCVELERLRKE) forms a coiled coil. A disordered region spans residues 475-537 (VEDSGLDSPS…PNPAPSSQSN (63 aa)). A compositionally biased stretch (polar residues) spans 501–520 (PSSQSQSKDSINAASQSRGG). Residues 630-894 (SWPVAAAITE…RFATGKYMAG (265 aa)) enclose the MHD domain.

It belongs to the FCHO family. May oligomerize and form homotetramer. Interacts with acvr1l/alk8; linking this receptor to clathrin-mediated endocytosis.

The protein localises to the membrane. It is found in the clathrin-coated pit. In terms of biological role, may function in an early step of clathrin-mediated endocytosis. May regulate Bmp signaling by regulating clathrin-mediated endocytosis of Bmp receptors. This Danio rerio (Zebrafish) protein is F-BAR domain only protein 1 (fcho1).